A 1385-amino-acid polypeptide reads, in one-letter code: DNA-directed RNA polymerase subunit beta (1385 aa).

It belongs to the RNA polymerase beta chain family. As to quaternary structure, the RNAP catalytic core consists of 2 alpha, 1 beta, 1 beta' and 1 omega subunit. When a sigma factor is associated with the core the holoenzyme is formed, which can initiate transcription.

It catalyses the reaction RNA(n) + a ribonucleoside 5'-triphosphate = RNA(n+1) + diphosphate. In terms of biological role, DNA-dependent RNA polymerase catalyzes the transcription of DNA into RNA using the four ribonucleoside triphosphates as substrates. This Jannaschia sp. (strain CCS1) protein is DNA-directed RNA polymerase subunit beta.